The chain runs to 726 residues: Catalase-peroxidase (726 aa).

Residues 1–34 (MSMSDDTHNSLSTGKCPFHQGSHDRSAGAGTSSH) form a disordered region. The tryptophyl-tyrosyl-methioninium (Trp-Tyr) (with M-252) cross-link spans 105-226 (WHGAGTYRSV…LGATEMGLIY (122 aa)). Residue His-106 is the Proton acceptor of the active site. The segment at residues 226-252 (YVNPEGPDHSGEPLSAAAAIRATFGNM) is a cross-link (tryptophyl-tyrosyl-methioninium (Tyr-Met) (with W-105)). His-267 is a binding site for heme b.

It belongs to the peroxidase family. Peroxidase/catalase subfamily. As to quaternary structure, homodimer or homotetramer. The cofactor is heme b. Post-translationally, formation of the three residue Trp-Tyr-Met cross-link is important for the catalase, but not the peroxidase activity of the enzyme.

It catalyses the reaction H2O2 + AH2 = A + 2 H2O. The enzyme catalyses 2 H2O2 = O2 + 2 H2O. Bifunctional enzyme with both catalase and broad-spectrum peroxidase activity. This chain is Catalase-peroxidase, found in Citrobacter koseri (strain ATCC BAA-895 / CDC 4225-83 / SGSC4696).